The sequence spans 327 residues: MTHSLRVIFAGTPEFAAAALAAIHEAGFPVPLVLTQPDRPAGRGMKLQASAVKRYAFERGMAVAQPPSLRRAGKYPAEAVAALDLLHATPHDVMVVAAYGLLLPQEVLELPRHGCINIHASLLPRWRGAAPIHRAIEAGDAETGVTLMQMDAGLDTGAMLHEARVAIAPDDTTATLHDKLAAAGARLIVDALVELERTGALAATPQPADGVTYAEKIGKHEAALDWRKPAAALARQVRAFDPFPGGAGTLDGATLKLWAADAVPGRDDAAPGTIVDIGPDGVVIACGEGALRVTQLQKPGGKRLPAREFLAGAPLAVGQRFAPADAA.

Residue 121 to 124 participates in (6S)-5,6,7,8-tetrahydrofolate binding; that stretch reads SLLP.

Belongs to the Fmt family.

The enzyme catalyses L-methionyl-tRNA(fMet) + (6R)-10-formyltetrahydrofolate = N-formyl-L-methionyl-tRNA(fMet) + (6S)-5,6,7,8-tetrahydrofolate + H(+). Its function is as follows. Attaches a formyl group to the free amino group of methionyl-tRNA(fMet). The formyl group appears to play a dual role in the initiator identity of N-formylmethionyl-tRNA by promoting its recognition by IF2 and preventing the misappropriation of this tRNA by the elongation apparatus. This chain is Methionyl-tRNA formyltransferase, found in Burkholderia mallei (strain ATCC 23344).